The chain runs to 420 residues: Phosphoglycerate kinase (420 aa).

The (2R)-3-phosphoglycerate site is built by Val26, Asp27, Tyr28, Asn29, Gln42, Arg43, Ser66, His67, Gly69, Arg70, Leu125, Arg126, His173, and Arg174. Phosphotyrosine is present on Tyr199. Ser206 is modified (phosphoserine). Positions 209-228 are calmodulin binding; the sequence is KPFLAILGGAKVSDKIKLIE. Residue Gly217 participates in ADP binding. Gly217 lines the CDP pocket. Residues Ala218 and Lys219 each coordinate AMP. An ATP-binding site is contributed by Ala218. Ala218 is a binding site for Mg(2+). Residue Asp222 participates in CDP binding. Residue Asp222 coordinates Mg(2+). Position 223 (Lys223) interacts with AMP. Residue Lys223 participates in ATP binding. Residue Gly241 participates in ADP binding. Gly241 serves as a coordination point for CDP. 2 residues coordinate AMP: Gly242 and Gly316. Gly242 and Gly316 together coordinate ATP. Residues Gly341 and Phe346 each contribute to the CDP site. Phe346 is an ADP binding site. Position 347 (Glu347) interacts with AMP. Positions 347, 378, and 379 each coordinate ATP. Position 378 (Asp378) interacts with Mg(2+). At Ser393 the chain carries Phosphoserine.

The protein belongs to the phosphoglycerate kinase family. In terms of assembly, monomer. Interacts with calmodulin in the presence of Ca(2+). Requires Mg(2+) as cofactor.

Its subcellular location is the cytoplasm. It catalyses the reaction (2R)-3-phosphoglycerate + ATP = (2R)-3-phospho-glyceroyl phosphate + ADP. It participates in carbohydrate degradation; glycolysis; pyruvate from D-glyceraldehyde 3-phosphate: step 2/5. This chain is Phosphoglycerate kinase, found in Dictyostelium discoideum (Social amoeba).